The primary structure comprises 208 residues: Cytochrome c biogenesis ATP-binding export protein CcmA (208 aa).

One can recognise an ABC transporter domain in the interval 3-206 (LSGKDLAAHR…LEKFVPSQER (204 aa)). An ATP-binding site is contributed by 35 to 42 (GPNGIGKS).

This sequence belongs to the ABC transporter superfamily. CcmA exporter (TC 3.A.1.107) family. In terms of assembly, the complex is composed of two ATP-binding proteins (CcmA) and two transmembrane proteins (CcmB).

It localises to the cell inner membrane. The enzyme catalyses heme b(in) + ATP + H2O = heme b(out) + ADP + phosphate + H(+). In terms of biological role, part of the ABC transporter complex CcmAB involved in the biogenesis of c-type cytochromes; once thought to export heme, this seems not to be the case, but its exact role is uncertain. Responsible for energy coupling to the transport system. This chain is Cytochrome c biogenesis ATP-binding export protein CcmA, found in Bartonella quintana (strain Toulouse) (Rochalimaea quintana).